The chain runs to 104 residues: NADH-quinone oxidoreductase subunit K (104 aa).

3 helical membrane-spanning segments follow: residues 4 to 24 (VPAS…LFGA), 31 to 51 (VIVL…LVAF), and 67 to 87 (LFTM…LIAL).

It belongs to the complex I subunit 4L family. NDH-1 is composed of 14 different subunits. Subunits NuoA, H, J, K, L, M, N constitute the membrane sector of the complex.

It is found in the cell membrane. The catalysed reaction is a quinone + NADH + 5 H(+)(in) = a quinol + NAD(+) + 4 H(+)(out). NDH-1 shuttles electrons from NADH, via FMN and iron-sulfur (Fe-S) centers, to quinones in the respiratory chain. The immediate electron acceptor for the enzyme in this species is believed to be a menaquinone. Couples the redox reaction to proton translocation (for every two electrons transferred, four hydrogen ions are translocated across the cytoplasmic membrane), and thus conserves the redox energy in a proton gradient. The chain is NADH-quinone oxidoreductase subunit K from Bacillus cereus (strain AH820).